The following is a 312-amino-acid chain: Ribosomal RNA small subunit methyltransferase H (312 aa).

S-adenosyl-L-methionine-binding positions include 35–37 (GGH), Asp-55, Phe-80, Asp-102, and Gln-109.

Belongs to the methyltransferase superfamily. RsmH family.

It localises to the cytoplasm. It carries out the reaction cytidine(1402) in 16S rRNA + S-adenosyl-L-methionine = N(4)-methylcytidine(1402) in 16S rRNA + S-adenosyl-L-homocysteine + H(+). In terms of biological role, specifically methylates the N4 position of cytidine in position 1402 (C1402) of 16S rRNA. This chain is Ribosomal RNA small subunit methyltransferase H, found in Pseudoalteromonas translucida (strain TAC 125).